Here is a 170-residue protein sequence, read N- to C-terminus: MVRLLLIFVLILSCVPKQEHPLMHNLEPSGEADFKVIELRVPEYLDTERIMYKTDKGFYYFAKNVWVCELSCVLENYFKKAQGGEEKVYLEVLDFYPVFTGKKEGYVYLRARVDRKKEYVYKIPFKVRSFEEIILKMNEAVNRLLEDVNKYVQITTSSKSISDSGLPTPP.

This is an uncharacterized protein from Aquifex aeolicus (strain VF5).